The chain runs to 269 residues: Lysyl endopeptidase (269 aa).

3 disulfide bridges follow: Cys-6–Cys-216, Cys-12–Cys-80, and Cys-36–Cys-58. Active-site charge relay system residues include His-57, Asp-113, and Ser-194.

This sequence belongs to the peptidase S1 family.

It is found in the secreted. The enzyme catalyses Preferential cleavage: Lys-|-Xaa, including Lys-|-Pro.. Its function is as follows. Highly specific endopeptidase that hydrolyzes lysyl bonds including the Lys-Pro bond. The sequence is that of Lysyl endopeptidase from Lysobacter enzymogenes.